The sequence spans 158 residues: Transcription elongation factor GreA (158 aa).

Belongs to the GreA/GreB family.

Necessary for efficient RNA polymerase transcription elongation past template-encoded arresting sites. The arresting sites in DNA have the property of trapping a certain fraction of elongating RNA polymerases that pass through, resulting in locked ternary complexes. Cleavage of the nascent transcript by cleavage factors such as GreA or GreB allows the resumption of elongation from the new 3'terminus. GreA releases sequences of 2 to 3 nucleotides. This chain is Transcription elongation factor GreA, found in Methylobacterium sp. (strain 4-46).